Reading from the N-terminus, the 175-residue chain is Phosphopantetheine adenylyltransferase (175 aa).

Ser-10 is a binding site for substrate. Residues 10 to 11 (SF) and His-18 each bind ATP. The substrate site is built by Lys-42, Leu-74, and Arg-88. ATP contacts are provided by residues 89–91 (GMR), Glu-99, and 124–130 (WIFTSSS).

It belongs to the bacterial CoaD family. In terms of assembly, homohexamer. Mg(2+) serves as cofactor.

Its subcellular location is the cytoplasm. The enzyme catalyses (R)-4'-phosphopantetheine + ATP + H(+) = 3'-dephospho-CoA + diphosphate. The protein operates within cofactor biosynthesis; coenzyme A biosynthesis; CoA from (R)-pantothenate: step 4/5. Functionally, reversibly transfers an adenylyl group from ATP to 4'-phosphopantetheine, yielding dephospho-CoA (dPCoA) and pyrophosphate. The polypeptide is Phosphopantetheine adenylyltransferase (Desulfatibacillum aliphaticivorans).